The primary structure comprises 130 residues: Large ribosomal subunit protein bL19 (130 aa).

This sequence belongs to the bacterial ribosomal protein bL19 family.

Its function is as follows. This protein is located at the 30S-50S ribosomal subunit interface and may play a role in the structure and function of the aminoacyl-tRNA binding site. In Burkholderia orbicola (strain MC0-3), this protein is Large ribosomal subunit protein bL19.